A 163-amino-acid polypeptide reads, in one-letter code: ATP synthase subunit b 1 (163 aa).

A helical membrane pass occupies residues 7-27 (AETWVAVAFVILMALFAYLGV).

Belongs to the ATPase B chain family. F-type ATPases have 2 components, F(1) - the catalytic core - and F(0) - the membrane proton channel. F(1) has five subunits: alpha(3), beta(3), gamma(1), delta(1), epsilon(1). F(0) has three main subunits: a(1), b(2) and c(10-14). The alpha and beta chains form an alternating ring which encloses part of the gamma chain. F(1) is attached to F(0) by a central stalk formed by the gamma and epsilon chains, while a peripheral stalk is formed by the delta and b chains.

Its subcellular location is the cell inner membrane. In terms of biological role, f(1)F(0) ATP synthase produces ATP from ADP in the presence of a proton or sodium gradient. F-type ATPases consist of two structural domains, F(1) containing the extramembraneous catalytic core and F(0) containing the membrane proton channel, linked together by a central stalk and a peripheral stalk. During catalysis, ATP synthesis in the catalytic domain of F(1) is coupled via a rotary mechanism of the central stalk subunits to proton translocation. Its function is as follows. Component of the F(0) channel, it forms part of the peripheral stalk, linking F(1) to F(0). The polypeptide is ATP synthase subunit b 1 (Rhodopseudomonas palustris (strain BisB5)).